The following is a 706-amino-acid chain: Termination factor NPH-I homolog (706 aa).

The 166-residue stretch at 62 to 227 (IGQGENTRGL…VPCFNMLSGR (166 aa)) folds into the Helicase ATP-binding domain. 75–82 (HQMGMGKT) contacts ATP. The DEAH box signature appears at 168-171 (DEAH). Residues 417–599 (QCLQPLKVLE…HLNSAFRDLL (183 aa)) enclose the Helicase C-terminal domain.

This sequence belongs to the DEAD box helicase family. DEAH subfamily. As to quaternary structure, part of the viral DNA-directed RNA polymerase that consists of 8 polII-like subunits (RPB1, RPB2, RPB3, RPB5, RPB6, RPB7, RPB9, RPB10), a capping enzyme and a termination factor.

The protein localises to the virion. Putative DNA-dependent ATPase required for providing the needed energy to achieve the termination of early transcripts. This chain is Termination factor NPH-I homolog, found in African swine fever virus (isolate Tick/South Africa/Pretoriuskop Pr4/1996) (ASFV).